Consider the following 2511-residue polypeptide: Chromodomain-helicase-DNA-binding protein 8 (2511 aa).

Residues Pro-484 to Lys-615 are disordered. The segment covering Gly-515–Gly-524 has biased composition (gly residues). Over residues Lys-604–Lys-615 the composition is skewed to basic residues. Chromo domains lie at Ala-680–Arg-745 and Val-760–Arg-826. The Helicase ATP-binding domain occupies Leu-859–Ala-1033. Asp-872 to Thr-879 lines the ATP pocket. Residues Asp-984 to His-987 carry the DEAH box motif. The region spanning Leu-1174–Ile-1330 is the Helicase C-terminal domain. Disordered regions lie at residues Thr-1440–Gly-1482, Glu-1715–Pro-1736, Ser-2086–Pro-2168, and Pro-2468–Asp-2511. Acidic residues predominate over residues Asp-1452–Asp-1461. Over residues Asp-2111–Asp-2125 the composition is skewed to low complexity.

This sequence belongs to the SNF2/RAD54 helicase family. CHD8 subfamily. Component of some MLL1/MLL complex.

The protein resides in the nucleus. It catalyses the reaction ATP + H2O = ADP + phosphate + H(+). In terms of biological role, ATP-dependent chromatin-remodeling factor, it slides nucleosomes along DNA; nucleosome sliding requires ATP. Acts as a transcription repressor by remodeling chromatin structure and recruiting histone H1 to target genes. Suppresses p53/tp53-mediated apoptosis by recruiting histone H1 and preventing p53/tp53 transactivation activity. Acts as a negative regulator of Wnt signaling pathway by regulating beta-catenin (ctnnb1) activity. Negatively regulates ctnnb1-targeted gene expression by being recruited specifically to the promoter regions of several ctnnb1 responsive genes. May also act as a transcription activator by participating in efficient U6 RNA polymerase III transcription. The protein is Chromodomain-helicase-DNA-binding protein 8 of Danio rerio (Zebrafish).